The following is a 48-amino-acid chain: Small polypeptide DEVIL 22 (48 aa).

A helical membrane pass occupies residues 7–23 (KLNKGHAFTSKCASLVK). The segment at 13-44 (AFTSKCASLVKEQRARLYILRRCATMLCCWYI) is required for DVL/RTFL small polypeptide activity.

It belongs to the DVL/RTFL small polypeptides family.

The protein resides in the cell membrane. Functionally, small polypeptide acting as a regulatory molecule which coordinates cellular responses required for differentiation, growth and development, probably by restricting polar cell proliferation in lateral organs and coordinating socket cell recruitment and differentiation at trichome sites. The chain is Small polypeptide DEVIL 22 from Arabidopsis thaliana (Mouse-ear cress).